Here is a 368-residue protein sequence, read N- to C-terminus: Phospho-N-acetylmuramoyl-pentapeptide-transferase (368 aa).

Transmembrane regions (helical) follow at residues 2 to 22 (IALI…TPLL), 51 to 71 (TLGG…SALY), 80 to 100 (PSWS…LGFI), 117 to 137 (GGKF…ALLI), 167 to 187 (VAII…TNAV), 193 to 213 (LDGL…IIAF), 234 to 254 (PLDL…FLWY), 271 to 291 (LGGL…AVVL), and 340 to 360 (FWMI…GDWV).

It belongs to the glycosyltransferase 4 family. MraY subfamily. Mg(2+) is required as a cofactor.

The protein resides in the cell membrane. It carries out the reaction UDP-N-acetyl-alpha-D-muramoyl-L-alanyl-gamma-D-glutamyl-meso-2,6-diaminopimeloyl-D-alanyl-D-alanine + di-trans,octa-cis-undecaprenyl phosphate = di-trans,octa-cis-undecaprenyl diphospho-N-acetyl-alpha-D-muramoyl-L-alanyl-D-glutamyl-meso-2,6-diaminopimeloyl-D-alanyl-D-alanine + UMP. The protein operates within cell wall biogenesis; peptidoglycan biosynthesis. Catalyzes the initial step of the lipid cycle reactions in the biosynthesis of the cell wall peptidoglycan: transfers peptidoglycan precursor phospho-MurNAc-pentapeptide from UDP-MurNAc-pentapeptide onto the lipid carrier undecaprenyl phosphate, yielding undecaprenyl-pyrophosphoryl-MurNAc-pentapeptide, known as lipid I. The sequence is that of Phospho-N-acetylmuramoyl-pentapeptide-transferase from Bifidobacterium longum (strain DJO10A).